A 557-amino-acid polypeptide reads, in one-letter code: MALSTFKREHIKKNLRNDEYDLVIIGGGITGAGIALDASERGMKVALVEMQDFAQGTSSRSTKLVHGGLRYLKQFQIGVVAETGKERAIVYENGPHVTTPEWMLLPMHKGGTFGKFSTSIGLGMYDRLAGVKKSERKKMLSKKETLAKEPLVKKEGLKGGGYYVEYRTDDARLTIEVMKRAAEKGAEIINYTKSEHFTYDKNQQVNGVKVIDKLTNENYTIKAKKVVNAAGPWVDDVRSGDYARNNKKLRLTKGVHVVIDQSKFPLGQAVYFDTEKDGRMIFAIPREGKAYVGTTDTFYDNIKSSPLTTQEDRDYLIDAINYMFPSVNVTDEDIESTWAGIRPLIYEEGKDPSEISRKDEIWEGKSGLLTIAGGKLTGYRHMAQDIVDLVSKRLKKDYGLTFSPCNTKGLAISGGDVGGSKNFDAFVEQKVDVAKGFGIDEDVARRLASKYGSNVDELFNIAQTSQYHDSKLPLEIYVELVYSIQQEMVYKPNDFLVRRSGKMYFNIKDVLDYKDAVIDIMADMLDYSPAQIEAYTEEVEQAIKEAQHGNNQPAVKE.

Residue 21 to 49 (DLVIIGGGITGAGIALDASERGMKVALVE) participates in FAD binding.

The protein belongs to the FAD-dependent glycerol-3-phosphate dehydrogenase family. Requires FAD as cofactor.

Its subcellular location is the cytoplasm. It catalyses the reaction a quinone + sn-glycerol 3-phosphate = dihydroxyacetone phosphate + a quinol. The protein operates within polyol metabolism; glycerol degradation via glycerol kinase pathway; glycerone phosphate from sn-glycerol 3-phosphate (aerobic route): step 1/1. The polypeptide is Aerobic glycerol-3-phosphate dehydrogenase (glpD) (Staphylococcus aureus (strain USA300)).